Reading from the N-terminus, the 116-residue chain is Thioredoxin H-type (116 aa).

Residues 2-115 enclose the Thioredoxin domain; it reads AEEAQVIACH…HKIAVHAPIT (114 aa). Active-site nucleophile residues include C39 and C42. C39 and C42 are joined by a disulfide.

Belongs to the thioredoxin family. Plant H-type subfamily.

Its subcellular location is the cytoplasm. Its function is as follows. Participates in various redox reactions through the reversible oxidation of the active center dithiol to a disulfide. The H form is known to activate a number of cytosolic enzymes. The protein is Thioredoxin H-type of Fagopyrum esculentum (Common buckwheat).